Here is a 359-residue protein sequence, read N- to C-terminus: MPAHLLQDDISSSYTTTTTITAPPSRVLQNGGDKLETMPLYLEDDIRPDIKDDIYDPTYKDKEGPSPKVEYVWRNIILMSLLHLGALYGITLIPTCKFYTWLWGVFYYFVSALGITAGAHRLWSHRSYKARLPLRLFLIIANTMAFQNDVYEWARDHRAHHKFSETHADPHNSRRGFFFSHVGWLLVRKHPAVKEKGSTLDLSDLEAEKLVMFQRRYYKPGLLMMCFILPTLVPWYFWGETFQNSVFVATFLRYAVVLNATWLVNSAAHLFGYRPYDKNISPRENILVSLGAVGEGFHNYHHSFPYDYSASEYRWHINFTTFFIDCMAALGLAYDRKKVSKAAILARIKRTGDGNYKSG.

The Cytoplasmic segment spans residues 1 to 72; the sequence is MPAHLLQDDI…EGPSPKVEYV (72 aa). The chain crosses the membrane as a helical span at residues 73-93; it reads WRNIILMSLLHLGALYGITLI. Asn75 is a substrate binding site. Residues 94 to 97 lie on the Lumenal side of the membrane; it reads PTCK. A helical membrane pass occupies residues 98–118; it reads FYTWLWGVFYYFVSALGITAG. Residues 119–217 are Cytoplasmic-facing; sequence AHRLWSHRSY…EKLVMFQRRY (99 aa). His120 and His125 together coordinate Fe cation. The Histidine box-1 signature appears at 120 to 125; it reads HRLWSH. The substrate site is built by Asn148, Arg155, and Asp156. Fe cation-binding residues include His157, His160, and His161. Residues 157–161 carry the Histidine box-2 motif; the sequence is HRAHH. Residues Arg188 and Lys189 each coordinate substrate. A phosphoserine mark is found at Ser198 and Ser203. A helical membrane pass occupies residues 218–237; sequence YKPGLLMMCFILPTLVPWYF. At 238–241 the chain is on the lumenal side; sequence WGET. The chain crosses the membrane as a helical span at residues 242–263; sequence FQNSVFVATFLRYAVVLNATWL. Trp262 contributes to the substrate binding site. Over 264–359 the chain is Cytoplasmic; the sequence is VNSAAHLFGY…RTGDGNYKSG (96 aa). Residues His269, His298, His301, and His302 each contribute to the Fe cation site. A Histidine box-3 motif is present at residues 298–302; the sequence is HNYHH.

Belongs to the fatty acid desaturase type 1 family. As to quaternary structure, may self-associate and form homodimers. It depends on Fe(2+) as a cofactor. As to expression, detected in fetal liver, lung and brain. Highly expressed in adult adipose tissue, and at lower levels in adult brain and lung.

It localises to the endoplasmic reticulum membrane. The enzyme catalyses octadecanoyl-CoA + 2 Fe(II)-[cytochrome b5] + O2 + 2 H(+) = (9Z)-octadecenoyl-CoA + 2 Fe(III)-[cytochrome b5] + 2 H2O. It carries out the reaction hexadecanoyl-CoA + 2 Fe(II)-[cytochrome b5] + O2 + 2 H(+) = (9Z)-hexadecenoyl-CoA + 2 Fe(III)-[cytochrome b5] + 2 H2O. In terms of biological role, stearoyl-CoA desaturase that utilizes O(2) and electrons from reduced cytochrome b5 to introduce the first double bond into saturated fatty acyl-CoA substrates. Catalyzes the insertion of a cis double bond at the delta-9 position into fatty acyl-CoA substrates including palmitoyl-CoA and stearoyl-CoA. Gives rise to a mixture of 16:1 and 18:1 unsaturated fatty acids. Plays an important role in lipid biosynthesis. Plays an important role in regulating the expression of genes that are involved in lipogenesis and in regulating mitochondrial fatty acid oxidation. Plays an important role in body energy homeostasis. Contributes to the biosynthesis of membrane phospholipids, cholesterol esters and triglycerides. This chain is Stearoyl-CoA desaturase (SCD), found in Homo sapiens (Human).